We begin with the raw amino-acid sequence, 636 residues long: Transcription termination factor FttA (636 aa).

Residues Glu4–Arg72 are KHa. Residues Lys73–Pro140 form a KHb region. The tract at residues Asn181–Pro383 is metallo-beta-lactamase N-terminus. His242, His244, Asp246, His247, His329, and Asp352 together coordinate Zn(2+). The beta-Casp stretch occupies residues Gln384–Ser577. A metallo-beta-lactamase C-terminus region spans residues Gly578 to Lys636. Residue His603 coordinates Zn(2+).

This sequence belongs to the metallo-beta-lactamase superfamily. RNA-metabolizing metallo-beta-lactamase-like family. FttA subfamily. As to quaternary structure, homodimer. Interacts with RNA polymerase (RNAP), interacts with the Spt4-Spt5 complex. It depends on Zn(2+) as a cofactor.

In terms of biological role, terminates transcription on the whole genome. Termination is linked to FttA-mediated RNA cleavage and does not require NTP hydrolysis. Cleaves endonucleolytically at the RNA exit channel of RNA polymerase (RNAP); the 5'-3' exonuclease activity of this protein degrades the nascent RNA released from RNAP. Terminates transcription genome-wide in M.maripaludis. Restores wild-type growth to a strain of Methanococcus maripaludis depleted for this gene at 22 degrees Celsius and prevents transcriptional read-through. Transcription termination is most effective in vivo on RNAs with more than one U4-tract in their 3'-ends. Has endonuclease activity after U-rich tracts in transcription termination sequences. In Lokiarchaeum sp. (strain GC14_75), this protein is Transcription termination factor FttA.